Reading from the N-terminus, the 177-residue chain is Large ribosomal subunit protein uL6 (177 aa).

This sequence belongs to the universal ribosomal protein uL6 family. As to quaternary structure, part of the 50S ribosomal subunit.

Its function is as follows. This protein binds to the 23S rRNA, and is important in its secondary structure. It is located near the subunit interface in the base of the L7/L12 stalk, and near the tRNA binding site of the peptidyltransferase center. The polypeptide is Large ribosomal subunit protein uL6 (Saccharophagus degradans (strain 2-40 / ATCC 43961 / DSM 17024)).